The chain runs to 200 residues: Lipopolysaccharide core heptose(II)-phosphate phosphatase (200 aa).

Residues 1-25 (MLAFCRSSLKSKKYFIILLALAAIA) form the signal peptide.

The protein belongs to the phosphoglycerate mutase family. Ais subfamily.

The protein resides in the periplasm. It functions in the pathway bacterial outer membrane biogenesis; lipopolysaccharide metabolism. In terms of biological role, catalyzes the dephosphorylation of heptose(II) of the outer membrane lipopolysaccharide core. In Escherichia coli O9:H4 (strain HS), this protein is Lipopolysaccharide core heptose(II)-phosphate phosphatase.